The sequence spans 274 residues: Large ribosomal subunit protein uL2 (274 aa).

The interval 221 to 256 (RGTAMNPVDHPHGGGEGRNFGKHPVTPWGVPTKGYK) is disordered.

It belongs to the universal ribosomal protein uL2 family. As to quaternary structure, part of the 50S ribosomal subunit. Forms a bridge to the 30S subunit in the 70S ribosome.

One of the primary rRNA binding proteins. Required for association of the 30S and 50S subunits to form the 70S ribosome, for tRNA binding and peptide bond formation. It has been suggested to have peptidyltransferase activity; this is somewhat controversial. Makes several contacts with the 16S rRNA in the 70S ribosome. This Hahella chejuensis (strain KCTC 2396) protein is Large ribosomal subunit protein uL2.